We begin with the raw amino-acid sequence, 262 residues long: uncharacterized protein (262 aa).

The chain crosses the membrane as a helical span at residues 13-35; sequence VVGALLTVVVIVTAAGIIYVISH.

It localises to the membrane. This is an uncharacterized protein from Archaeoglobus fulgidus (strain ATCC 49558 / DSM 4304 / JCM 9628 / NBRC 100126 / VC-16).